The following is a 434-amino-acid chain: MALEKTRGRRISVGETAVVVGAGRSGLAAARLLCREGAQVRLLDSNADAFSGREALAGELRQLGISIELGPHKPDQFENAAFVVPSPGMPVARLAGLVDEERAEILAEMELAWRYLENEPVLAVTGTSGKTTTASLAAAMLHEQGYAVFLGGNIGTPLSEYVLSGHKADVLVLEISSFQLQTCSTFCPRAGILLNITPNHLDYHKDMAEYTEAKFRLFRCQDEGDLAVLGESLRSLAARYGLKARQVYVSDAGRFSGSSLMGAHNRVNEEAAWQACRLFGVSEENAARALARFAPLPHRLERVRELEGVLFVNDSKCTTVSSLKVALEAFDRPVRLVCGGKFKGGDLAGLADLVKNRVSAVALFGAGREHFERAWQGLVPMTWHASLEPAVKHLAASACRGDVVLMAPATSSFDLYANYEERGKDFKRIVGKLS.

ATP is bound at residue 126-132 (GTSGKTT).

Belongs to the MurCDEF family.

The protein localises to the cytoplasm. The enzyme catalyses UDP-N-acetyl-alpha-D-muramoyl-L-alanine + D-glutamate + ATP = UDP-N-acetyl-alpha-D-muramoyl-L-alanyl-D-glutamate + ADP + phosphate + H(+). It functions in the pathway cell wall biogenesis; peptidoglycan biosynthesis. Its function is as follows. Cell wall formation. Catalyzes the addition of glutamate to the nucleotide precursor UDP-N-acetylmuramoyl-L-alanine (UMA). This Desulfovibrio desulfuricans (strain ATCC 27774 / DSM 6949 / MB) protein is UDP-N-acetylmuramoylalanine--D-glutamate ligase.